We begin with the raw amino-acid sequence, 231 residues long: Elongation factor 1-delta (231 aa).

The segment at 75–136 (SGVTVEGNAP…AAAAAAKPAK (62 aa)) is disordered. Positions 101–117 (ADDDDDDDVDLFGEETE) are enriched in acidic residues. Positions 118 to 127 (EEKKAAEERA) are enriched in basic and acidic residues.

The protein belongs to the EF-1-beta/EF-1-delta family. EF-1 is composed of 4 subunits: alpha, beta (1B-alpha=beta'), delta (1B-beta), and gamma (1B-gamma).

Its function is as follows. EF-1-beta and EF-1-beta' stimulate the exchange of GDP bound to EF-1-alpha to GTP. In Beta vulgaris (Sugar beet), this protein is Elongation factor 1-delta.